A 289-amino-acid polypeptide reads, in one-letter code: ATP synthase gamma chain (289 aa).

The protein belongs to the ATPase gamma chain family. In terms of assembly, F-type ATPases have 2 components, CF(1) - the catalytic core - and CF(0) - the membrane proton channel. CF(1) has five subunits: alpha(3), beta(3), gamma(1), delta(1), epsilon(1). CF(0) has three main subunits: a, b and c.

It is found in the cell membrane. Produces ATP from ADP in the presence of a proton gradient across the membrane. The gamma chain is believed to be important in regulating ATPase activity and the flow of protons through the CF(0) complex. The polypeptide is ATP synthase gamma chain (Alkaliphilus metalliredigens (strain QYMF)).